A 258-amino-acid polypeptide reads, in one-letter code: Ribosomal RNA small subunit methyltransferase A (258 aa).

Residues His13, Leu15, Gly40, Glu61, Asp86, and Asn106 each contribute to the S-adenosyl-L-methionine site.

Belongs to the class I-like SAM-binding methyltransferase superfamily. rRNA adenine N(6)-methyltransferase family. RsmA subfamily.

Its subcellular location is the cytoplasm. The catalysed reaction is adenosine(1518)/adenosine(1519) in 16S rRNA + 4 S-adenosyl-L-methionine = N(6)-dimethyladenosine(1518)/N(6)-dimethyladenosine(1519) in 16S rRNA + 4 S-adenosyl-L-homocysteine + 4 H(+). Functionally, specifically dimethylates two adjacent adenosines (A1518 and A1519) in the loop of a conserved hairpin near the 3'-end of 16S rRNA in the 30S particle. May play a critical role in biogenesis of 30S subunits. The polypeptide is Ribosomal RNA small subunit methyltransferase A (Coxiella burnetii (strain Dugway 5J108-111)).